A 231-amino-acid polypeptide reads, in one-letter code: U1 small nuclear ribonucleoprotein C (231 aa).

A Matrin-type zinc finger spans residues 4–36 (YYCEYCHSYLTHDTLSVRKSHLVGKNHLRITAD). Positions 49–61 (HNHKRRHIGKRGR) are enriched in basic residues. Disordered regions lie at residues 49-71 (HNHKRRHIGKRGRKERENSSQNE), 137-177 (PQRA…LEPP), and 205-231 (ESKKRMHSDGIRKPSSANGYKRRRYGN).

It belongs to the U1 small nuclear ribonucleoprotein C family. In terms of assembly, U1 snRNP is composed of the 7 core Sm proteins SMB1, SMD1, SMD2, SMD3, SME1, SMX3 and SMX2 (Sm proteins B, D1, D2, D3, E, F and G, respectively) that assemble in a heptameric protein ring on the Sm site of the small nuclear RNA to form the core snRNP, and at least 10 U1 snRNP-specific proteins SNP1/U1-70K, MUD1/U1-A, YHC1/U1-C, LUC7, NAM8, PRP39, PRP40, PRP42, SNU56 and SNU71. YHC1/U1-C interacts with U1 snRNA and the 5' splice-site region of the pre-mRNA.

The protein resides in the nucleus. Functionally, component of the spliceosomal U1 snRNP, which is essential for recognition of the pre-mRNA 5' splice-site and the subsequent assembly of the spliceosome. YHC1/U1-C is directly involved in initial 5' splice-site recognition for both constitutive and regulated alternative splicing. The interaction with the 5' splice-site seems to precede base-pairing between the pre-mRNA and the U1 snRNA. Stimulates commitment or early (E) complex formation by stabilizing the base pairing of the 5' end of the U1 snRNA and the 5' splice-site region. The polypeptide is U1 small nuclear ribonucleoprotein C (Saccharomyces cerevisiae (strain ATCC 204508 / S288c) (Baker's yeast)).